Here is a 1122-residue protein sequence, read N- to C-terminus: Midnolin homolog (1122 aa).

In terms of domain architecture, Ubiquitin-like spans 69–143 (INLNISTTTG…IILIPNVETG (75 aa)). Residues 210–300 (GGASGSSINA…SGQRSSGRIG (91 aa)) are required for interaction with Pc. Disordered regions lie at residues 257–399 (VGGS…STLN), 596–630 (KHRH…HFFN), 645–677 (FATS…GAGA), 746–775 (GVVS…KSGS), 840–876 (APTT…RSKM), 886–905 (KCNS…ASGS), 922–955 (AATK…NGCT), and 1067–1122 (AAPA…DTAA). Residues 266 to 298 (SGTSSSSSSTSSSSSSSSSSSRTRSSGQRSSGR) show a composition bias toward low complexity. Basic residues-rich tracts occupy residues 300–310 (GHGHVHSHQHP) and 321–352 (SHGH…HHHN). A compositionally biased stretch (low complexity) spans 375–397 (PSSSGASGSAPATGTGQSQSSST). Residues 596–610 (KHRHYHGQGHGHGHG) show a composition bias toward basic residues. 6 stretches are compositionally biased toward low complexity: residues 612–627 (GHSS…SSSH), 648–663 (SSSS…SSSP), 746–766 (GVVS…AASG), 856–867 (SGSSSTTSSGSG), 889–903 (SRAQ…TLAS), and 922–936 (AATK…SSHS). 2 stretches are compositionally biased toward polar residues: residues 937 to 954 (CCQT…SNGC) and 1071 to 1085 (NSIT…VNGN). The segment covering 1086–1107 (TSTAPATAATSAAAAPTAAPPS) has biased composition (low complexity).

As to quaternary structure, interacts with PRC1 complex member polycomb protein Pc; the interaction targets Pc for ubiquitin-independent proteasomal degradation. Does not interact with PRC1 members Ph, Psc or Sce so does not appear to be a member of the PRC1 complex. Interacts with 26S proteasome regulatory subunit Rpn10.

The protein localises to the nucleus. In terms of biological role, facilitates ubiquitin-independent proteasomal degradation of polycomb protein Pc by interacting directly with the proteasome and recruiting Pc to it. This is Midnolin homolog from Drosophila melanogaster (Fruit fly).